Reading from the N-terminus, the 319-residue chain is tRNA uridine(34) hydroxylase (319 aa).

Residues 133–231 form the Rhodanese domain; sequence EDPDSVVIDT…YLEDVSSENS (99 aa). C191 (cysteine persulfide intermediate) is an active-site residue.

The protein belongs to the TrhO family.

It catalyses the reaction uridine(34) in tRNA + AH2 + O2 = 5-hydroxyuridine(34) in tRNA + A + H2O. Catalyzes oxygen-dependent 5-hydroxyuridine (ho5U) modification at position 34 in tRNAs. The protein is tRNA uridine(34) hydroxylase of Prochlorococcus marinus (strain NATL1A).